The sequence spans 253 residues: Patatin-like phospholipase domain-containing protein 4 (253 aa).

Residues 6–176 (LSFAACGFLG…TNALPILPVG (171 aa)) form the PNPLA domain. A GXSXG motif is present at residues 41-45 (GASAG). Serine 43 (nucleophile) is an active-site residue. The Proton acceptor role is filled by aspartate 163. Residues 163–165 (DGG) carry the DGA/G motif.

In terms of tissue distribution, expressed in all tissues examined, including heart, brain, placenta, lung, liver, muscle, kidney, pancreas and spleen.

It is found in the mitochondrion. The enzyme catalyses a triacylglycerol + H2O = a diacylglycerol + a fatty acid + H(+). The catalysed reaction is a 1,2-diacyl-sn-glycero-3-phosphocholine + H2O = a 1-acyl-sn-glycero-3-phosphocholine + a fatty acid + H(+). It carries out the reaction an all-trans-retinyl ester + H2O = all-trans-retinol + a fatty acid + H(+). It catalyses the reaction 2 a 1-acylglycerol = a 1,2-diacylglycerol + glycerol. The enzyme catalyses a 1-acylglycerol + a 1,2-diacylglycerol = a triacylglycerol + glycerol. The catalysed reaction is a 1-acylglycerol + a 1,3-diacylglycerol = a triacylglycerol + glycerol. It carries out the reaction a triacylglycerol + H2O = a 1,2-diacylglycerol + a fatty acid + H(+). It catalyses the reaction a triacylglycerol + H2O = a 1,3-diacylglycerol + a fatty acid + H(+). The enzyme catalyses a triacylglycerol + all-trans-retinol = an all-trans-retinyl ester + a diacylglycerol. The catalysed reaction is 2 1-(9Z-octadecenoyl)-glycerol = 1,2-di-(9Z-octadecenoyl)-glycerol + glycerol. It carries out the reaction 1-(9Z-octadecenoyl)-glycerol + 1,2-di-(9Z-octadecenoyl)-glycerol = 1,2,3-tri-(9Z-octadecenoyl)-glycerol + glycerol. It catalyses the reaction 1-(9Z-octadecenoyl)-glycerol + 1,3-di-(9Z-octadecenoyl)-glycerol = 1,2,3-tri-(9Z-octadecenoyl)-glycerol + glycerol. The enzyme catalyses 1,2-di-(9Z-octadecenoyl)-glycerol + (9Z)-octadecenoate + H(+) = 1,2,3-tri-(9Z-octadecenoyl)-glycerol + H2O. The catalysed reaction is 1,2,3-tri-(9Z-octadecenoyl)-glycerol + H2O = 1,3-di-(9Z-octadecenoyl)-glycerol + (9Z)-octadecenoate + H(+). It carries out the reaction all-trans-retinyl hexadecanoate + H2O = all-trans-retinol + hexadecanoate + H(+). It catalyses the reaction 1,2,3-tri-(9Z-octadecenoyl)-glycerol + all-trans-retinol = all-trans-retinyl 9Z-octadecenoate + di-(9Z)-octadecenoylglycerol. The triglyceride lipase activity is inhibited by BEL ((E)-6-(bromomethylene)-3-(1-naphthalenyl)-2H-tetrahydropyran-2-one), a suicide substrate inhibitor. In terms of biological role, has abundant triacylglycerol lipase activity. Transfers fatty acid from triglyceride to retinol, hydrolyzes retinylesters, and generates 1,3-diacylglycerol from triglycerides. Additionally possesses acylglycerol transacylase and phospholipase A2 activities. This chain is Patatin-like phospholipase domain-containing protein 4, found in Homo sapiens (Human).